Reading from the N-terminus, the 230-residue chain is UPF0173 metal-dependent hydrolase MK1542 (230 aa).

It belongs to the UPF0173 family.

This is UPF0173 metal-dependent hydrolase MK1542 from Methanopyrus kandleri (strain AV19 / DSM 6324 / JCM 9639 / NBRC 100938).